The sequence spans 96 residues: Protein RnfH (96 aa).

It belongs to the UPF0125 (RnfH) family.

This is Protein RnfH from Pectobacterium carotovorum subsp. carotovorum (strain PC1).